We begin with the raw amino-acid sequence, 483 residues long: Glutamyl-tRNA(Gln) amidotransferase subunit A (483 aa).

Catalysis depends on charge relay system residues lysine 76 and serine 151. The active-site Acyl-ester intermediate is the serine 175.

The protein belongs to the amidase family. GatA subfamily. In terms of assembly, heterotrimer of A, B and C subunits.

It carries out the reaction L-glutamyl-tRNA(Gln) + L-glutamine + ATP + H2O = L-glutaminyl-tRNA(Gln) + L-glutamate + ADP + phosphate + H(+). Its function is as follows. Allows the formation of correctly charged Gln-tRNA(Gln) through the transamidation of misacylated Glu-tRNA(Gln) in organisms which lack glutaminyl-tRNA synthetase. The reaction takes place in the presence of glutamine and ATP through an activated gamma-phospho-Glu-tRNA(Gln). The sequence is that of Glutamyl-tRNA(Gln) amidotransferase subunit A from Pseudomonas entomophila (strain L48).